Reading from the N-terminus, the 201-residue chain is NAD(P)H dehydrogenase (quinone) (201 aa).

Residues Val-4–Val-191 enclose the Flavodoxin-like domain. Residues Ser-10–Val-15 and Thr-79–Phe-81 contribute to the FMN site. Tyr-12 lines the NAD(+) pocket. Trp-99 lines the substrate pocket. FMN contacts are provided by residues Ser-114–Gly-120 and His-135.

Belongs to the WrbA family. Requires FMN as cofactor.

The catalysed reaction is a quinone + NADH + H(+) = a quinol + NAD(+). It catalyses the reaction a quinone + NADPH + H(+) = a quinol + NADP(+). The polypeptide is NAD(P)H dehydrogenase (quinone) (Hydrogenovibrio crunogenus (strain DSM 25203 / XCL-2) (Thiomicrospira crunogena)).